A 159-amino-acid chain; its full sequence is NADH-quinone oxidoreductase subunit B (159 aa).

Positions 36, 37, 102, and 132 each coordinate [4Fe-4S] cluster.

The protein belongs to the complex I 20 kDa subunit family. In terms of assembly, NDH-1 is composed of 14 different subunits. Subunits NuoB, C, D, E, F, and G constitute the peripheral sector of the complex. [4Fe-4S] cluster serves as cofactor.

The protein localises to the cell inner membrane. It catalyses the reaction a quinone + NADH + 5 H(+)(in) = a quinol + NAD(+) + 4 H(+)(out). Its function is as follows. NDH-1 shuttles electrons from NADH, via FMN and iron-sulfur (Fe-S) centers, to quinones in the respiratory chain. Couples the redox reaction to proton translocation (for every two electrons transferred, four hydrogen ions are translocated across the cytoplasmic membrane), and thus conserves the redox energy in a proton gradient. The protein is NADH-quinone oxidoreductase subunit B of Albidiferax ferrireducens (strain ATCC BAA-621 / DSM 15236 / T118) (Rhodoferax ferrireducens).